The sequence spans 123 residues: UPF0231 protein plu3616 (123 aa).

Belongs to the UPF0231 family.

The chain is UPF0231 protein plu3616 from Photorhabdus laumondii subsp. laumondii (strain DSM 15139 / CIP 105565 / TT01) (Photorhabdus luminescens subsp. laumondii).